The primary structure comprises 455 residues: Growth/differentiation factor 9 (455 aa).

Residues 1–24 form the signal peptide; the sequence is MALPNKFLLWFYCFAWLCFPVSLG. A propeptide spanning residues 25 to 320 is cleaved from the precursor; that stretch reads SQASGGDAQI…GRSSHHRHRR (296 aa). Residues Asn106, Asn163, Asn236, Asn255, and Asn269 are each glycosylated (N-linked (GlcNAc...) asparagine). Residues 305 to 328 are disordered; sequence EDAAEDGRSSHHRHRRGQETVSSE. An N-linked (GlcNAc...) asparagine glycan is attached at Asn339. 3 disulfide bridges follow: Cys354-Cys420, Cys383-Cys452, and Cys387-Cys454.

This sequence belongs to the TGF-beta family. As to quaternary structure, homodimer or heterodimer (Potential). But, in contrast to other members of this family, cannot be disulfide-linked. Post-translationally, phosphorylated; phosphorylation is critical for GDF9 function.

The protein resides in the secreted. Required for ovarian folliculogenesis. In Papio anubis (Olive baboon), this protein is Growth/differentiation factor 9 (GDF9).